A 553-amino-acid chain; its full sequence is Urocanate hydratase (553 aa).

Residues 45–46, Gln123, 169–171, Asp189, Arg194, 235–236, 256–260, 266–267, Tyr315, and Gly485 each bind NAD(+); these read GG, GMG, NA, QTSAH, and YV.

It belongs to the urocanase family. NAD(+) serves as cofactor.

Its subcellular location is the cytoplasm. The enzyme catalyses 4-imidazolone-5-propanoate = trans-urocanate + H2O. The protein operates within amino-acid degradation; L-histidine degradation into L-glutamate; N-formimidoyl-L-glutamate from L-histidine: step 2/3. In terms of biological role, catalyzes the conversion of urocanate to 4-imidazolone-5-propionate. This Staphylococcus aureus (strain Mu50 / ATCC 700699) protein is Urocanate hydratase.